The chain runs to 880 residues: Valine--tRNA ligase (880 aa).

Positions 49-59 (PNVTGKLHLGH) match the 'HIGH' region motif. The short motif at 525-529 (KMSKS) is the 'KMSKS' region element. Lys-528 serves as a coordination point for ATP. Residues 809-879 (LAGLLDLEEE…AVRARIKELK (71 aa)) are a coiled coil.

This sequence belongs to the class-I aminoacyl-tRNA synthetase family. ValS type 1 subfamily. In terms of assembly, monomer.

It localises to the cytoplasm. It catalyses the reaction tRNA(Val) + L-valine + ATP = L-valyl-tRNA(Val) + AMP + diphosphate. In terms of biological role, catalyzes the attachment of valine to tRNA(Val). As ValRS can inadvertently accommodate and process structurally similar amino acids such as threonine, to avoid such errors, it has a 'posttransfer' editing activity that hydrolyzes mischarged Thr-tRNA(Val) in a tRNA-dependent manner. In Halalkalibacterium halodurans (strain ATCC BAA-125 / DSM 18197 / FERM 7344 / JCM 9153 / C-125) (Bacillus halodurans), this protein is Valine--tRNA ligase.